Here is a 665-residue protein sequence, read N- to C-terminus: Sodium-dependent phosphate transporter 1-B (665 aa).

6 helical membrane passes run 26 to 46 (YMWL…SVGA), 67 to 87 (ACIL…AKVS), 107 to 127 (LMAG…AASF), 163 to 183 (IVAS…VLFY), 202 to 222 (ALPF…MFTG), and 235 to 255 (GVLL…WFAV). Disordered regions lie at residues 294 to 345 (VPEE…APKT) and 423 to 442 (ESEF…AQER). Residues 296–306 (EESSVLSSSTP) show a composition bias toward low complexity. Basic and acidic residues predominate over residues 329 to 338 (ADQKDCKESD). 4 consecutive transmembrane segments (helical) span residues 499–519 (VSML…FAHG), 548–568 (TPIW…WVWG), 588–608 (FSIE…GLPV), and 638–658 (IFMA…AIMA).

Belongs to the inorganic phosphate transporter (PiT) (TC 2.A.20) family.

It is found in the membrane. Sodium-phosphate symporter which plays a fundamental housekeeping role in phosphate transport. This Danio rerio (Zebrafish) protein is Sodium-dependent phosphate transporter 1-B (slc20a1b).